Here is a 457-residue protein sequence, read N- to C-terminus: Ribosome biogenesis protein YTM1 (457 aa).

Positions 8–89 are ubiquitin-like (UBL) domain; it reads VKVKFFTREK…ETTLTVEYTR (82 aa). Positions 99–457 are sufficient for interaction with ERB1 and association with 66S pre-ribosomes; sequence NFNNDDWVSA…INKGDNIFKN (359 aa). WD repeat units follow at residues 101 to 140, 142 to 180, 203 to 241, 282 to 322, 324 to 363, 370 to 410, and 421 to 457; these read NNDDWVSALDVSDDFRHIYSGSYDGVVRTWNMSGKVEKQY, GHTGAVKAVKYISNTRIVSAGNDRSLRLWKTKNDDGSVS, GHKAPVVSLDVASNSRILSASYDNTVALWSTIYKEMTAI, SHTG…CIDT, TTSYPLLSIAQMPTLNLLACGSSVRHITLHDPRVSSSAKI, GHKN…PMYT, and GVNDKVFAVKWAKSIGIISGGQDKKIQINKGDNIFKN. The tract at residues 172 to 191 is disordered; sequence TKNDDGSVSNNTGDENDEEN.

The protein belongs to the WD repeat WDR12/YTM1 family. As to quaternary structure, component of the NOP7 complex, composed of ERB1, NOP7 and YTM1. The complex is held together by ERB1, which interacts with NOP7 via its N-terminal domain and with YTM1 via a high-affinity interaction between the seven-bladed beta-propeller domains of the 2 proteins. The NOP7 complex associates with the 66S pre-ribosome. Interacts (via UBL domain) with MDN1 (via VWFA/MIDAS domain).

Its subcellular location is the nucleus. It localises to the nucleolus. It is found in the nucleoplasm. Component of the NOP7 complex, which is required for maturation of the 25S and 5.8S ribosomal RNAs and formation of the 60S ribosome. The polypeptide is Ribosome biogenesis protein YTM1 (Candida glabrata (strain ATCC 2001 / BCRC 20586 / JCM 3761 / NBRC 0622 / NRRL Y-65 / CBS 138) (Yeast)).